The following is a 319-amino-acid chain: uncharacterized protein (319 aa).

The tract at residues 21–70 is disordered; the sequence is ETETLKNSTDEVQTSSSFSSSGGRQSSPLTSGSKLEREKQTPSLEQGDTQ. Residues 25–34 show a composition bias toward polar residues; the sequence is LKNSTDEVQT. A compositionally biased stretch (low complexity) spans 35–51; that stretch reads SSSFSSSGGRQSSPLTS. Positions 61-70 are enriched in polar residues; it reads TPSLEQGDTQ.

This is an uncharacterized protein from Homo sapiens (Human).